The primary structure comprises 319 residues: Coproporphyrin III ferrochelatase 2 (319 aa).

Fe-coproporphyrin III is bound by residues Y13, R30, 46 to 47 (RY), S54, and Y125. Fe(2+)-binding residues include H181 and E262.

It belongs to the ferrochelatase family.

Its subcellular location is the cytoplasm. The catalysed reaction is Fe-coproporphyrin III + 2 H(+) = coproporphyrin III + Fe(2+). It functions in the pathway porphyrin-containing compound metabolism; protoheme biosynthesis. Involved in coproporphyrin-dependent heme b biosynthesis. Catalyzes the insertion of ferrous iron into coproporphyrin III to form Fe-coproporphyrin III. This is Coproporphyrin III ferrochelatase 2 from Bacillus cereus (strain ZK / E33L).